Here is a 129-residue protein sequence, read N- to C-terminus: Large-conductance mechanosensitive channel (129 aa).

Transmembrane regions (helical) follow at residues Phe10–Gly30 and Gly76–Val96.

Belongs to the MscL family. In terms of assembly, homopentamer.

Its subcellular location is the cell inner membrane. Channel that opens in response to stretch forces in the membrane lipid bilayer. May participate in the regulation of osmotic pressure changes within the cell. This is Large-conductance mechanosensitive channel from Actinobacillus pleuropneumoniae serotype 5b (strain L20).